Consider the following 340-residue polypeptide: tRNA N6-adenosine threonylcarbamoyltransferase (340 aa).

Fe cation-binding residues include His-111 and His-115. Residues 134–138, Asp-167, Gly-180, and Asn-276 contribute to the substrate site; that span reads LVSGG. A Fe cation-binding site is contributed by Asp-304.

Belongs to the KAE1 / TsaD family. Fe(2+) is required as a cofactor.

The protein localises to the cytoplasm. The catalysed reaction is L-threonylcarbamoyladenylate + adenosine(37) in tRNA = N(6)-L-threonylcarbamoyladenosine(37) in tRNA + AMP + H(+). Its function is as follows. Required for the formation of a threonylcarbamoyl group on adenosine at position 37 (t(6)A37) in tRNAs that read codons beginning with adenine. Is involved in the transfer of the threonylcarbamoyl moiety of threonylcarbamoyl-AMP (TC-AMP) to the N6 group of A37, together with TsaE and TsaB. TsaD likely plays a direct catalytic role in this reaction. In Helicobacter pylori (strain ATCC 700392 / 26695) (Campylobacter pylori), this protein is tRNA N6-adenosine threonylcarbamoyltransferase.